We begin with the raw amino-acid sequence, 361 residues long: Chorismate synthase (361 aa).

NADP(+) is bound by residues R48 and R54. FMN contacts are provided by residues 125–127 (RSS), 238–239 (NA), G278, 293–297 (KPTSS), and R319.

It belongs to the chorismate synthase family. Homotetramer. FMNH2 is required as a cofactor.

It carries out the reaction 5-O-(1-carboxyvinyl)-3-phosphoshikimate = chorismate + phosphate. It participates in metabolic intermediate biosynthesis; chorismate biosynthesis; chorismate from D-erythrose 4-phosphate and phosphoenolpyruvate: step 7/7. Functionally, catalyzes the anti-1,4-elimination of the C-3 phosphate and the C-6 proR hydrogen from 5-enolpyruvylshikimate-3-phosphate (EPSP) to yield chorismate, which is the branch point compound that serves as the starting substrate for the three terminal pathways of aromatic amino acid biosynthesis. This reaction introduces a second double bond into the aromatic ring system. In Escherichia coli (strain SE11), this protein is Chorismate synthase.